The following is an 84-amino-acid chain: MERSNRKTRIGRVVSNKMDKTIVVAVETKVRHPLYGKIMNRTTKFKAHDENNAANINDKVSIMETRPLSKQKRWRLVEVVEKAK.

This sequence belongs to the universal ribosomal protein uS17 family. In terms of assembly, part of the 30S ribosomal subunit.

In terms of biological role, one of the primary rRNA binding proteins, it binds specifically to the 5'-end of 16S ribosomal RNA. This chain is Small ribosomal subunit protein uS17, found in Clostridium botulinum (strain Okra / Type B1).